Reading from the N-terminus, the 141-residue chain is Aspartate 1-decarboxylase (141 aa).

S25 functions as the Schiff-base intermediate with substrate; via pyruvic acid in the catalytic mechanism. A Pyruvic acid (Ser) modification is found at S25. Position 57 (T57) interacts with substrate. Y58 functions as the Proton donor in the catalytic mechanism. G73–A75 lines the substrate pocket. The segment at A121–G141 is disordered.

Belongs to the PanD family. In terms of assembly, heterooctamer of four alpha and four beta subunits. Pyruvate serves as cofactor. Post-translationally, is synthesized initially as an inactive proenzyme, which is activated by self-cleavage at a specific serine bond to produce a beta-subunit with a hydroxyl group at its C-terminus and an alpha-subunit with a pyruvoyl group at its N-terminus.

The protein localises to the cytoplasm. The enzyme catalyses L-aspartate + H(+) = beta-alanine + CO2. Its pathway is cofactor biosynthesis; (R)-pantothenate biosynthesis; beta-alanine from L-aspartate: step 1/1. Catalyzes the pyruvoyl-dependent decarboxylation of aspartate to produce beta-alanine. This Streptomyces griseus subsp. griseus (strain JCM 4626 / CBS 651.72 / NBRC 13350 / KCC S-0626 / ISP 5235) protein is Aspartate 1-decarboxylase.